Consider the following 319-residue polypeptide: Protein quaking-B (319 aa).

Residues 87 to 153 (YVPVKEYPDF…WEHLNEDLHV (67 aa)) form the KH domain. The short motif at 276 to 279 (PQTP) is the SH3-binding element.

It belongs to the quaking family. In terms of assembly, homodimer; does not require RNA to homodimerize.

Its subcellular location is the cytoplasm. The protein localises to the nucleus. RNA reader protein, which recognizes and binds specific RNAs, thereby regulating RNA metabolic processes, such as pre-mRNA splicing, circular RNA (circRNA) formation, mRNA export, mRNA stability and/or translation. Involved in various cellular processes, such as mRNA storage into stress granules, apoptosis, interferon response, glial cell fate and development. Binds to the 5'-NACUAAY-N(1,20)-UAAY-3' RNA core sequence. Acts as a mRNA modification reader that specifically recognizes and binds mRNA transcripts modified by internal N(7)-methylguanine (m7G). Promotes the formation of circular RNAs (circRNAs): acts by binding to sites flanking circRNA-forming exons. CircRNAs are produced by back-splicing circularization of pre-mRNAs. Required to protect and promote stability of mRNAs which promotes oligodendrocyte differentiation. Acts as an important regulator of muscle development: required during early skeletal myofibril formation by regulating the accumulation of the muscle-specific tropomyosin-3 (tpm3) transcripts. This Danio rerio (Zebrafish) protein is Protein quaking-B (qki2).